The primary structure comprises 326 residues: ELAV-like protein 1 (326 aa).

S2 carries the post-translational modification N-acetylserine. At S2 the chain carries Phosphoserine. The 79-residue stretch at T20 to P98 folds into the RRM 1 domain. S100 and S158 each carry phosphoserine. The region spanning A106–N186 is the RRM 2 domain. A Glycyl lysine isopeptide (Lys-Gly) (interchain with G-Cter in SUMO2) cross-link involves residue K191. 2 positions are modified to phosphoserine: S197 and S202. Residue R206 is modified to Omega-N-methylarginine. R217 carries the post-translational modification Asymmetric dimethylarginine; by CARM1; alternate. Residue R217 is modified to Omega-N-methylarginine; alternate. 2 positions are modified to phosphoserine: S221 and S318. Residues W244–N322 form the RRM 3 domain.

Belongs to the RRM elav family. In terms of assembly, monomer and homodimer (in vitro). Interacts with ANP32A. Interacts with ZNF385A; the interaction is indirect and mRNA-dependent and may regulate p53/TP53 expression. Identified in a mRNP complex, at least composed of DHX9, DDX3X, ELAVL1, HNRNPU, IGF2BP1, ILF3, PABPC1, PCBP2, PTBP2, STAU1, STAU2, SYNCRIP and YBX1. Interacts with AGO1 and AGO2. Interacts with IGF2BP1. Interacts with IGF2BP2 and IGF2BP3. Interacts with HNRNPL. Interacts with DHX36; this interaction occurs in a RNA-dependent manner. Interacts with ILF3; this interaction occurs in a RNA-dependent manner. Interacts with PLEKHN1. Interacts with SHFL; the interaction increases in presence of RNA. Interacts with YBX1; interaction recruits ELAVL1 on C5-methylcytosine (m5C)-containing mRNAs, thereby promoting mRNA stability. Interacts with FXR1. Post-translationally, phosphorylated by MAPKAPK2. Phosphorylated by PRKCD. In terms of processing, methylated at Arg-217 by CARM1 in T-cells in response to LPS challenge.

It is found in the cytoplasm. The protein localises to the nucleus. Its subcellular location is the stress granule. The protein resides in the P-body. Its function is as follows. RNA-binding protein that binds to the 3'-UTR region of mRNAs and increases their stability. Involved in embryonic stem cell (ESC) differentiation: preferentially binds mRNAs that are not methylated by N6-methyladenosine (m6A), stabilizing them, promoting ESC differentiation. Has also been shown to be capable of binding to m6A-containing mRNAs and contributes to MYC stability by binding to m6A-containing MYC mRNAs. Binds to poly-U elements and AU-rich elements (AREs) in the 3'-UTR of target mRNAs. Binds avidly to the AU-rich element in FOS and IL3/interleukin-3 mRNAs. In the case of the FOS AU-rich element, binds to a core element of 27 nucleotides that contain AUUUA, AUUUUA, and AUUUUUA motifs. Binds preferentially to the 5'-UUUU[AG]UUU-3' motif in vitro. With ZNF385A, binds the 3'-UTR of p53/TP53 mRNA to control their nuclear export induced by CDKN2A. Hence, may regulate p53/TP53 expression and mediate in part the CDKN2A anti-proliferative activity. May also bind with ZNF385A the CCNB1 mRNA. Increases the stability of the leptin mRNA harboring an AU-rich element (ARE) in its 3' UTR. This Mus musculus (Mouse) protein is ELAV-like protein 1 (Elavl1).